The sequence spans 477 residues: MSPQTETKASVGFKAGVKEYKLTYYTPEYQTKDTDILAAFRVTPQPGVPPEEAGAAVAAESSTGTWTTVWTDGLTSLDRYKGRCYRIERVVGEKDQYIAYVAYPLDLFEEGSVTNMFTSIVGNVFGFKALRALRLEDLRIPTAYVKTFQGPPHGIQVERDKLNKYGRPLLGCTIKPKLGLSAKNYGRAVYECLRGGLDFTKDDENVNSQPFMRWRDRFLFCAEALFKAQTETGEIKGHYLNATAGTCEEMMKRAVFARELGVPIVMHDYLTGGFTANTTLAHYCRDNGLLLHIHRAMHAVIDRQKNHGIHFRVLAKALRMSGGDHIHSGTVVGKLEGERDITLGFVDLLRDDFIEQDRSRGIYFTQDWVSLPGVLPVASGGIHVWHMPALTEIFGDDSVLQFGGGTLGHPWGNAPGAVANRVALEACVKARNEGRDLAREGNEIIREASKWSPELAAACEVWKEIVFNFAAVDVLDK.

The propeptide occupies 1-2 (MS). An N-acetylproline modification is found at P3. An N6,N6,N6-trimethyllysine modification is found at K14. Residues N123 and T173 each contribute to the substrate site. K175 serves as the catalytic Proton acceptor. K177 provides a ligand contact to substrate. Mg(2+) contacts are provided by K201, D203, and E204. Position 201 is an N6-carboxylysine (K201). H294 (proton acceptor) is an active-site residue. Substrate contacts are provided by R295, H327, and S379.

It belongs to the RuBisCO large chain family. Type I subfamily. As to quaternary structure, heterohexadecamer of 8 large chains and 8 small chains; disulfide-linked. The disulfide link is formed within the large subunit homodimers. It depends on Mg(2+) as a cofactor. Post-translationally, the disulfide bond which can form in the large chain dimeric partners within the hexadecamer appears to be associated with oxidative stress and protein turnover.

It is found in the plastid. It localises to the chloroplast. It catalyses the reaction 2 (2R)-3-phosphoglycerate + 2 H(+) = D-ribulose 1,5-bisphosphate + CO2 + H2O. It carries out the reaction D-ribulose 1,5-bisphosphate + O2 = 2-phosphoglycolate + (2R)-3-phosphoglycerate + 2 H(+). Functionally, ruBisCO catalyzes two reactions: the carboxylation of D-ribulose 1,5-bisphosphate, the primary event in carbon dioxide fixation, as well as the oxidative fragmentation of the pentose substrate in the photorespiration process. Both reactions occur simultaneously and in competition at the same active site. The protein is Ribulose bisphosphate carboxylase large chain of Solanum bulbocastanum (Wild potato).